We begin with the raw amino-acid sequence, 217 residues long: Adenylate kinase (217 aa).

10–15 is a binding site for ATP; sequence GAGKGT. Residues 30–59 form an NMP region; the sequence is STGDMLRAAVKAGTPLGIEAKKVMDAGGLV. AMP-binding positions include threonine 31, arginine 36, 57-59, 85-88, and glutamine 92; these read GLV and GFPR. Residues 122-159 form an LID region; the sequence is GRRAHLASGRTYHVKYNPPKVEGKDDVTGEDLVQRDDD. ATP is bound by residues arginine 123 and 132–133; that span reads TY. Arginine 156 and arginine 167 together coordinate AMP. Position 203 (glycine 203) interacts with ATP.

It belongs to the adenylate kinase family. In terms of assembly, monomer.

Its subcellular location is the cytoplasm. The catalysed reaction is AMP + ATP = 2 ADP. It functions in the pathway purine metabolism; AMP biosynthesis via salvage pathway; AMP from ADP: step 1/1. Functionally, catalyzes the reversible transfer of the terminal phosphate group between ATP and AMP. Plays an important role in cellular energy homeostasis and in adenine nucleotide metabolism. The chain is Adenylate kinase from Azoarcus sp. (strain BH72).